Here is a 220-residue protein sequence, read N- to C-terminus: Regulatory protein VanRB (220 aa).

One can recognise a Response regulatory domain in the interval 4–117; it reads RILLVEDDDH…ILLKRVEALL (114 aa). Asp-53 is subject to 4-aspartylphosphate. The ompR/PhoB-type DNA-binding region spans 124–218; it reads AKEFRVGRLT…IRGVGYRLEE (95 aa).

Post-translationally, may be phosphorylated by VanSB. May also be dephosphorylated by VanSB.

It localises to the cytoplasm. In terms of biological role, member of the two-component regulatory system VanSB/VanRB. Activates the transcription of vanSB, vanYB and vanW in response to vancomycin which results in vancomycin resistance. This chain is Regulatory protein VanRB (vanRB), found in Enterococcus faecalis (strain ATCC 700802 / V583).